Here is an 813-residue protein sequence, read N- to C-terminus: DNA gyrase subunit A (813 aa).

A Topo IIA-type catalytic domain is found at 38–504 (LPDVRDGLKP…EIEYLDVEDF (467 aa)). Catalysis depends on Tyr-126, which acts as the O-(5'-phospho-DNA)-tyrosine intermediate. Residues 531-537 (QNRGGKG) carry the GyrA-box motif.

This sequence belongs to the type II topoisomerase GyrA/ParC subunit family. Heterotetramer, composed of two GyrA and two GyrB chains. In the heterotetramer, GyrA contains the active site tyrosine that forms a transient covalent intermediate with DNA, while GyrB binds cofactors and catalyzes ATP hydrolysis.

Its subcellular location is the cytoplasm. It carries out the reaction ATP-dependent breakage, passage and rejoining of double-stranded DNA.. Functionally, a type II topoisomerase that negatively supercoils closed circular double-stranded (ds) DNA in an ATP-dependent manner to modulate DNA topology and maintain chromosomes in an underwound state. Negative supercoiling favors strand separation, and DNA replication, transcription, recombination and repair, all of which involve strand separation. Also able to catalyze the interconversion of other topological isomers of dsDNA rings, including catenanes and knotted rings. Type II topoisomerases break and join 2 DNA strands simultaneously in an ATP-dependent manner. This Treponema pallidum (strain Nichols) protein is DNA gyrase subunit A.